We begin with the raw amino-acid sequence, 81 residues long: Photosystem I iron-sulfur center (81 aa).

4Fe-4S ferredoxin-type domains lie at 2-31 and 39-68; these read SHSV…MVPW and IASS…IRVY. Residues cysteine 11, cysteine 14, cysteine 17, cysteine 21, cysteine 48, cysteine 51, cysteine 54, and cysteine 58 each coordinate [4Fe-4S] cluster.

In terms of assembly, the G.violaceus PSI reaction center is composed of one copy each of PsaA,B,C,D,E,F,L,M and Z, and forms trimeric complexes. [4Fe-4S] cluster is required as a cofactor.

The protein localises to the cell inner membrane. The enzyme catalyses reduced [plastocyanin] + hnu + oxidized [2Fe-2S]-[ferredoxin] = oxidized [plastocyanin] + reduced [2Fe-2S]-[ferredoxin]. Apoprotein for the two 4Fe-4S centers FA and FB of photosystem I (PSI); essential for photochemical activity. FB is the terminal electron acceptor of PSI, donating electrons to ferredoxin. The C-terminus interacts with PsaA/B/D and helps assemble the protein into the PSI complex. Required for binding of PsaD and PsaE to PSI. PSI is a plastocyanin/cytochrome c6-ferredoxin oxidoreductase, converting photonic excitation into a charge separation, which transfers an electron from the donor P700 chlorophyll pair to the spectroscopically characterized acceptors A0, A1, FX, FA and FB in turn. In Gloeobacter violaceus (strain ATCC 29082 / PCC 7421), this protein is Photosystem I iron-sulfur center.